Here is a 716-residue protein sequence, read N- to C-terminus: Fatty acid oxidation complex subunit alpha (716 aa).

Residues 1–189 (MIYQSPTIQV…KVGAIDAVVA (189 aa)) are enoyl-CoA hydratase/isomerase. D296 is a substrate binding site. The segment at 311 to 716 (KDVNQAAVLG…AANNGSYYQA (406 aa)) is 3-hydroxyacyl-CoA dehydrogenase. NAD(+)-binding positions include M324, D343, 400–402 (VVE), K407, and S429. H450 serves as the catalytic For 3-hydroxyacyl-CoA dehydrogenase activity. N453 lines the NAD(+) pocket. Substrate-binding residues include N500 and Y660.

It in the N-terminal section; belongs to the enoyl-CoA hydratase/isomerase family. This sequence in the C-terminal section; belongs to the 3-hydroxyacyl-CoA dehydrogenase family. Heterotetramer of two alpha chains (FadB) and two beta chains (FadA).

It catalyses the reaction a (3S)-3-hydroxyacyl-CoA + NAD(+) = a 3-oxoacyl-CoA + NADH + H(+). The enzyme catalyses a (3S)-3-hydroxyacyl-CoA = a (2E)-enoyl-CoA + H2O. The catalysed reaction is a 4-saturated-(3S)-3-hydroxyacyl-CoA = a (3E)-enoyl-CoA + H2O. It carries out the reaction (3S)-3-hydroxybutanoyl-CoA = (3R)-3-hydroxybutanoyl-CoA. It catalyses the reaction a (3Z)-enoyl-CoA = a 4-saturated (2E)-enoyl-CoA. The enzyme catalyses a (3E)-enoyl-CoA = a 4-saturated (2E)-enoyl-CoA. The protein operates within lipid metabolism; fatty acid beta-oxidation. Its function is as follows. Involved in the aerobic and anaerobic degradation of long-chain fatty acids via beta-oxidation cycle. Catalyzes the formation of 3-oxoacyl-CoA from enoyl-CoA via L-3-hydroxyacyl-CoA. It can also use D-3-hydroxyacyl-CoA and cis-3-enoyl-CoA as substrate. The sequence is that of Fatty acid oxidation complex subunit alpha from Shewanella frigidimarina (strain NCIMB 400).